Reading from the N-terminus, the 413-residue chain is Protein FAM8A1 (413 aa).

Positions 1–10 (MAEGPEEARG) are enriched in basic and acidic residues. Residues 1–105 (MAEGPEEARG…PEAAAPRERP (105 aa)) are disordered. A compositionally biased stretch (low complexity) spans 49 to 64 (APGRPTAPGLAAAAAA). Positions 65 to 78 (DKLEPPRELRKRGE) are enriched in basic and acidic residues. The necessary and sufficient to interact with SYVN1 stretch occupies residues 107-139 (RLSAREYSRQVHEWLWQSYCGYLTWHSGLAAFP). Positions 217–236 (PVTRVGSAAPSRSPSETGRQ) are disordered. Ser-229 is subject to Phosphoserine. Positions 242–408 (VIPSLAHRFM…DIVAGTIVVK (167 aa)) constitute an RDD domain. The next 3 helical transmembrane spans lie at 257-277 (FFILFFIKATIVLSIMHLSGI), 304-324 (MMVVALIYRLLVCFYEIICIW), and 371-391 (ALIKNFSIASFFPAFITLLFF).

In terms of assembly, component of the HRD1 complex, which comprises at least SYNV1/HRD1, FAM8A1, HERPUD1/HERP, OS9, SEL1L and UBE2J1. This interaction stabilizes FAM8A1 protein, preventing its proteasomal degradation. FAM8A1 binding to SYNV1 may promote recruitment of HERPUD1 to the HRD1 complex. As to expression, ubiquitously expressed, with a higher level of expression in testis.

The protein resides in the membrane. In terms of biological role, plays a role in the assembly of the HRD1 complex, a complex involved in the ubiquitin-proteasome-dependent process of ER-associated degradation (ERAD). In Homo sapiens (Human), this protein is Protein FAM8A1 (FAM8A1).